The primary structure comprises 595 residues: Pyranose dehydrogenase (595 aa).

The signal sequence occupies residues 1–21 (MARFNARLFSIAILGFQVARS). Residues Asn-95 and Asn-110 are each glycosylated (N-linked (GlcNAc...) asparagine). Position 123 is a tele-8alpha-FAD histidine (His-123). Residues Asn-195, Asn-337, Asn-367, Asn-502, and Asn-510 are each glycosylated (N-linked (GlcNAc...) asparagine). Residue His-530 is the Proton acceptor of the active site. Asn-541 carries N-linked (GlcNAc...) asparagine glycosylation. Residue His-574 is part of the active site.

This sequence belongs to the GMC oxidoreductase family. Monomer. The cofactor is FAD. In terms of processing, N-glycosylated.

It is found in the secreted. It carries out the reaction pyranose + acceptor = pyranos-2-ulose + reduced acceptor.. It catalyses the reaction pyranose + acceptor = pyranos-3-ulose + reduced acceptor.. The enzyme catalyses pyranose + acceptor = pyranos-2,3-diulose + reduced acceptor.. The catalysed reaction is a pyranoside + acceptor = a pyranosid-3-ulose + reduced acceptor.. It carries out the reaction a pyranoside + acceptor = a pyranosid-3,4-diulose + reduced acceptor.. Catalyzes the single-oxidation or sequential double oxidation reaction of carbohydrates primarily at carbon-2 and/or carbon-3 with the concomitant reduction of the flavin. The enzyme exhibits a broad sugar substrate specificity, oxidizing different aldopyranoses to the corresponding C-1, C-2, C-3 or C-1,2, C-2,3 and C-3,4 (di)dehydro sugars with substrate-specific regioselectivity. Accepts only a narrow range of electron acceptors such as substituted benzoquinones and complexed metal ions and reacts extremely slowly with O(2) as acceptor. May play a role in the natural recycling of plant matter by oxidizing all major monosaccharides in lignocellulose and by reducing quinone compounds or reactive radical species generated during lignin depolymerization. This Agaricus campestris (Field mushroom) protein is Pyranose dehydrogenase.